Consider the following 415-residue polypeptide: MQFLPKADPEIFAALKKEDERQENNLEMIASENFVSRAVLEAYTSTLTNKYAEGYPGKRYYNGCHNADIVESLAIERAKELFGAEYANVQPHSGAQANMAVFLACLEPGDSFLGMNLAHGGHLTHGSPVNVSGRIYKPIPYGVDSKTETIDYDEIAKLAREHKPKLIVAGASAYARTIDFSKFAEIAKEVGAKLMADIAHISGLVSTGYHPSPVGLFDFVTTTTHKTLRGPRGGLILSTLENEKVLNSRVFPGIQGGPLMHVIAAKAVAFKEALQPEYKKYIEIVLANAKTLAEVFLKRGYRVVSGGTDNHLVLLDVSVKGLTGVQAADGLDEVGVTVNKNAIPFDKNPPAVASGIRLGTPALTTRGLKPADMETVGNLICDFLDNPNEEKNKKRVKGGVQEITRKFPMDQFRLD.

(6S)-5,6,7,8-tetrahydrofolate contacts are provided by residues leucine 117 and 121 to 123 (GHL). Lysine 226 is modified (N6-(pyridoxal phosphate)lysine).

Belongs to the SHMT family. As to quaternary structure, homodimer. Pyridoxal 5'-phosphate is required as a cofactor.

The protein localises to the cytoplasm. The enzyme catalyses (6R)-5,10-methylene-5,6,7,8-tetrahydrofolate + glycine + H2O = (6S)-5,6,7,8-tetrahydrofolate + L-serine. The protein operates within one-carbon metabolism; tetrahydrofolate interconversion. Its pathway is amino-acid biosynthesis; glycine biosynthesis; glycine from L-serine: step 1/1. In terms of biological role, catalyzes the reversible interconversion of serine and glycine with tetrahydrofolate (THF) serving as the one-carbon carrier. This reaction serves as the major source of one-carbon groups required for the biosynthesis of purines, thymidylate, methionine, and other important biomolecules. Also exhibits THF-independent aldolase activity toward beta-hydroxyamino acids, producing glycine and aldehydes, via a retro-aldol mechanism. This chain is Serine hydroxymethyltransferase, found in Leptospira borgpetersenii serovar Hardjo-bovis (strain JB197).